Consider the following 379-residue polypeptide: Dihydroflavonol 4-reductase (379 aa).

Lys56 and Tyr175 together coordinate NADP(+).

The protein belongs to the NAD(P)-dependent epimerase/dehydratase family. Dihydroflavonol-4-reductase subfamily. Expressed in both leaf and hypocotyl tissues.

The enzyme catalyses a (2R,3S,4S)-leucoanthocyanidin + NADP(+) = a (2R,3R)-dihydroflavonol + NADPH + H(+). The catalysed reaction is (2S)-flavan-4-ol + NADP(+) = (2S)-flavanone + NADPH + H(+). It functions in the pathway pigment biosynthesis; anthocyanin biosynthesis. Bifunctional enzyme involved in flavonoid metabolism. This Solanum lycopersicum (Tomato) protein is Dihydroflavonol 4-reductase.